We begin with the raw amino-acid sequence, 317 residues long: MPAQGSQRSLLGSLNSTLMATSSLGLSANQSGPQCLEVSVPDGLFLCLGLVSLVENMLVVAAIAKNRNLHSPMYCFICCLALSDLLVSVSNVLETAVMLLLEAGALAAQATVVQQLDNIIDVLVCSSMVSSLCFLGAIAMDRYISIFYALRYHSIVTLSRAQWATAAVWAAGILSSTLFIAYYDHTAVLLCLVVFFLAMLVLMAVLYAHMLTQACQHVQGITRLHKRQHLVQQGFGLKGAATLTILLGVFLLCWGPFFLHLTLIAVCPQHPTCSCVFKNFKLFLALIICNAIVDPLIYAFRXQELRKTLKEVLLFSW.

Topologically, residues 1–37 are extracellular; sequence MPAQGSQRSLLGSLNSTLMATSSLGLSANQSGPQCLE. Asparagine 15 and asparagine 29 each carry an N-linked (GlcNAc...) asparagine glycan. Residues 38–63 traverse the membrane as a helical segment; that stretch reads VSVPDGLFLCLGLVSLVENMLVVAAI. Residues 64–72 lie on the Cytoplasmic side of the membrane; sequence AKNRNLHSP. The chain crosses the membrane as a helical span at residues 73-93; sequence MYCFICCLALSDLLVSVSNVL. Over 94-118 the chain is Extracellular; sequence ETAVMLLLEAGALAAQATVVQQLDN. Residues 119 to 140 form a helical membrane-spanning segment; sequence IIDVLVCSSMVSSLCFLGAIAM. The Cytoplasmic segment spans residues 141-163; that stretch reads DRYISIFYALRYHSIVTLSRAQW. Residues 164–183 traverse the membrane as a helical segment; that stretch reads ATAAVWAAGILSSTLFIAYY. At 184–191 the chain is on the extracellular side; the sequence is DHTAVLLC. Residues 192–211 traverse the membrane as a helical segment; the sequence is LVVFFLAMLVLMAVLYAHML. The Cytoplasmic portion of the chain corresponds to 212-240; sequence TQACQHVQGITRLHKRQHLVQQGFGLKGA. Residues 241–266 traverse the membrane as a helical segment; it reads ATLTILLGVFLLCWGPFFLHLTLIAV. Topologically, residues 267 to 279 are extracellular; sequence CPQHPTCSCVFKN. The chain crosses the membrane as a helical span at residues 280–300; that stretch reads FKLFLALIICNAIVDPLIYAF. Over 301–317 the chain is Cytoplasmic; it reads RXQELRKTLKEVLLFSW.

Belongs to the G-protein coupled receptor 1 family. As to quaternary structure, interacts with MGRN1, but does not undergo MGRN1-mediated ubiquitination; this interaction competes with GNAS-binding and thus inhibits agonist-induced cAMP production. Interacts with OPN3; the interaction results in a decrease in MC1R-mediated cAMP signaling and ultimately a decrease in melanin production in melanocytes.

Its subcellular location is the cell membrane. In terms of biological role, receptor for MSH (alpha, beta and gamma) and ACTH. The activity of this receptor is mediated by G proteins which activate adenylate cyclase. Mediates melanogenesis, the production of eumelanin (black/brown) and phaeomelanin (red/yellow), via regulation of cAMP signaling in melanocytes. In Loris tardigradus (Slender loris), this protein is Melanocyte-stimulating hormone receptor (MC1R).